The following is a 175-amino-acid chain: MMTYIVFILSTVFVVGFVGFSSKPSPVYGGVGLIVSGGVGCGIIMNFSGSFLGLMVFLIYLGGMMVVFGYTAAMATELYPEVWVSNKVVFGAFVFGLFMEMLLVLYVLKEGSVGIAFEFSNLGDWVVYGVEDSGYFSKEAVGISSLYSYGMWLVVVTGWSLFIAVVVVMEVTRGG.

The next 5 helical transmembrane spans lie at 1–21 (MMTY…VGFS), 27–47 (VYGG…IMNF), 49–69 (GSFL…VVFG), 88–108 (VVFG…LYVL), and 149–169 (YGMW…VVVM).

The protein belongs to the complex I subunit 6 family. As to quaternary structure, core subunit of respiratory chain NADH dehydrogenase (Complex I) which is composed of 45 different subunits.

Its subcellular location is the mitochondrion inner membrane. The enzyme catalyses a ubiquinone + NADH + 5 H(+)(in) = a ubiquinol + NAD(+) + 4 H(+)(out). Core subunit of the mitochondrial membrane respiratory chain NADH dehydrogenase (Complex I) which catalyzes electron transfer from NADH through the respiratory chain, using ubiquinone as an electron acceptor. Essential for the catalytic activity and assembly of complex I. This Pteropus scapulatus (Little red flying fox) protein is NADH-ubiquinone oxidoreductase chain 6 (MT-ND6).